The following is a 137-amino-acid chain: Molluscan insulin-related peptide 2 (137 aa).

An N-terminal signal peptide occupies residues 1-31 (MVGVRLVFTNAFVVTVLLTLLLDVVVKPAEG). Residue Gln-32 is modified to Pyrrolidone carboxylic acid. 3 disulfides stabilise this stretch: Cys-47-Cys-123, Cys-59-Cys-136, and Cys-122-Cys-127. Residues 71–83 (DAETGWLLPETMV) constitute a propeptide, C-beta peptide like. A propeptide spans 86 to 110 (NAETDLDDPLRNIKLSSESALTYLT) (C-alpha peptide like). Gln-113 bears the Pyrrolidone carboxylic acid mark.

It belongs to the insulin family. In terms of assembly, heterodimer of a B chain and an A chain linked by two disulfide bonds. In terms of tissue distribution, expressed in the cerebral light-green cells which are giant neuroendocrines cells involved in the control of growth.

The protein resides in the cytoplasmic vesicle. Its subcellular location is the secretory vesicle. This chain is Molluscan insulin-related peptide 2, found in Lymnaea stagnalis (Great pond snail).